The following is a 241-amino-acid chain: Homeobox protein TGIF2LX (241 aa).

Disordered stretches follow at residues 1-58 (MEAA…GNLP) and 125-207 (KTGK…ELVS). Positions 10–39 (ETQSPVQKDSPAKTQSPAQDTSIMSRNNAD) are enriched in polar residues. A DNA-binding region (homeobox; TALE-type) is located at residues 48–111 (EHKKKRKGNL…INARRRILPD (64 aa)).

This sequence belongs to the TALE/TGIF homeobox family.

Its subcellular location is the nucleus. In terms of biological role, may have a transcription role in testis. The protein is Homeobox protein TGIF2LX (TGIF2LX) of Pan troglodytes (Chimpanzee).